We begin with the raw amino-acid sequence, 431 residues long: Fumarylacetoacetase fahA (431 aa).

Position 133 (aspartate 133) interacts with Ca(2+). Tyrosine 135 is a substrate binding site. Histidine 140 (proton acceptor) is an active-site residue. Arginine 149 lines the substrate pocket. Residues glutamate 209, glutamate 211, and aspartate 243 each contribute to the Ca(2+) site. Aspartate 243 provides a ligand contact to Mg(2+). Glutamine 250 and tyrosine 254 together coordinate substrate. Residues lysine 263 and threonine 267 each contribute to the Mg(2+) site. Position 362 (threonine 362) interacts with substrate. Residues 362 to 381 (TISGKENQTQGSLLEQTNGK) show a composition bias toward polar residues. The tract at residues 362–382 (TISGKENQTQGSLLEQTNGKN) is disordered.

This sequence belongs to the FAH family. Ca(2+) is required as a cofactor. It depends on Mg(2+) as a cofactor.

It catalyses the reaction 4-fumarylacetoacetate + H2O = acetoacetate + fumarate + H(+). It functions in the pathway amino-acid degradation; L-phenylalanine degradation; acetoacetate and fumarate from L-phenylalanine: step 6/6. Functionally, fumarylacetoacetase; part of the L-tyrosine degradation gene cluster that mediates the biosynthesis of the brownish pigment pyomelanin as an alternative melanin. The 4-hydroxyphenylpyruvate dioxygenase hppD catalyzes the conversion of 4-hydroxyphenylpyruvate to homogentisic acid (HGA). The protein hmgX is crucial for this conversion and thus, probably functions as an accessory factor to mediate specific activity of hppD. The homogentisate 1,2-dioxygenase hmgA is then involved in the cleavage of the aromatic ring of HGA and its conversion to 4-maleylacetoacetate. When hmgA activity is lowered by the cell wall integrity (CWI) signaling pathway, HGA accumulates and leads to the production of pyomelanin through benzoquinone acetic acid after oxidation and polymerization. On the opposite, in non-stress conditions, both hppD and hmgA activities are balanced and HGA is degraded into 4-maleylacetoacetate. 4-maleylacetoacetate is further converted to 4-fumarylacetoacetate by the maleylacetoacetate isomerase maiA, which is degraded into fumarate and acetoacetate by the fumarylacetoacetase fahA. This Aspergillus fumigatus (strain ATCC MYA-4609 / CBS 101355 / FGSC A1100 / Af293) (Neosartorya fumigata) protein is Fumarylacetoacetase fahA.